The sequence spans 316 residues: Pseudouridine-5'-phosphate glycosidase (316 aa).

Glu-31 acts as the Proton donor in catalysis. Substrate contacts are provided by Lys-92 and Val-112. Asp-144 is a binding site for Mn(2+). Substrate is bound at residue 146–148 (SAD). The Nucleophile role is filled by Lys-165.

This sequence belongs to the pseudouridine-5'-phosphate glycosidase family. As to quaternary structure, homotrimer. Requires Mn(2+) as cofactor.

The catalysed reaction is D-ribose 5-phosphate + uracil = psi-UMP + H2O. Its function is as follows. Catalyzes the reversible cleavage of pseudouridine 5'-phosphate (PsiMP) to ribose 5-phosphate and uracil. Functions biologically in the cleavage direction, as part of a pseudouridine degradation pathway. Part of an operon that could be involved in the biosynthesis of the blue pigment indigoidine, which is implicated in pathogenicity and protection from oxidative stress. The sequence is that of Pseudouridine-5'-phosphate glycosidase from Dickeya dadantii (strain 3937) (Erwinia chrysanthemi (strain 3937)).